A 256-amino-acid polypeptide reads, in one-letter code: Hydroxyacylglutathione hydrolase (256 aa).

Zn(2+) contacts are provided by His-57, His-59, Asp-61, His-62, His-115, Asp-134, and His-172.

It belongs to the metallo-beta-lactamase superfamily. Glyoxalase II family. In terms of assembly, monomer. The cofactor is Zn(2+).

The catalysed reaction is an S-(2-hydroxyacyl)glutathione + H2O = a 2-hydroxy carboxylate + glutathione + H(+). The protein operates within secondary metabolite metabolism; methylglyoxal degradation; (R)-lactate from methylglyoxal: step 2/2. Thiolesterase that catalyzes the hydrolysis of S-D-lactoyl-glutathione to form glutathione and D-lactic acid. This is Hydroxyacylglutathione hydrolase from Maricaulis maris (strain MCS10) (Caulobacter maris).